A 176-amino-acid chain; its full sequence is Prepronociceptin (176 aa).

Residues 1–19 (MKILFCDLLLLSLFSSVSS) form the signal peptide. 2 consecutive propeptides follow at residues 20 to 95 (SCQK…MQHL) and 169 to 176 (TLHQNGNA).

It belongs to the opioid neuropeptide precursor family. In terms of processing, specific enzymatic cleavages at paired basic residues probably yield other active peptides besides nociceptin. The N-terminal domain contains 6 conserved cysteines thought to be involved in disulfide bonding and/or processing.

It is found in the secreted. Ligand of the opioid receptor-like receptor OPRL1. It may act as a transmitter in the brain by modulating nociceptive and locomotor behavior. May be involved in neuronal differentiation and development. Its function is as follows. Blocks nociceptin action in pain transmission by inhibiting nociceptin-induced hyperalgesia and allodynia. In terms of biological role, has potent analgesic activity. This Bos taurus (Bovine) protein is Prepronociceptin (PNOC).